The primary structure comprises 332 residues: Beta-ketoacyl-[acyl-carrier-protein] synthase III (332 aa).

Residues Cys112 and His252 contribute to the active site. The ACP-binding stretch occupies residues 253 to 257; the sequence is QANLR. Asn282 is an active-site residue.

The protein belongs to the thiolase-like superfamily. FabH family. As to quaternary structure, homodimer.

The protein localises to the cytoplasm. It catalyses the reaction malonyl-[ACP] + acetyl-CoA + H(+) = 3-oxobutanoyl-[ACP] + CO2 + CoA. Its pathway is lipid metabolism; fatty acid biosynthesis. In terms of biological role, catalyzes the condensation reaction of fatty acid synthesis by the addition to an acyl acceptor of two carbons from malonyl-ACP. Catalyzes the first condensation reaction which initiates fatty acid synthesis and may therefore play a role in governing the total rate of fatty acid production. Possesses both acetoacetyl-ACP synthase and acetyl transacylase activities. Its substrate specificity determines the biosynthesis of branched-chain and/or straight-chain of fatty acids. The sequence is that of Beta-ketoacyl-[acyl-carrier-protein] synthase III from Syntrophomonas wolfei subsp. wolfei (strain DSM 2245B / Goettingen).